Here is a 196-residue protein sequence, read N- to C-terminus: Small ribosomal subunit protein uS4c (196 aa).

Positions Met-82 to Asn-143 constitute an S4 RNA-binding domain.

The protein belongs to the universal ribosomal protein uS4 family. In terms of assembly, part of the 30S ribosomal subunit. Contacts protein S5. The interaction surface between S4 and S5 is involved in control of translational fidelity.

It localises to the plastid. It is found in the chloroplast. One of the primary rRNA binding proteins, it binds directly to 16S rRNA where it nucleates assembly of the body of the 30S subunit. In terms of biological role, with S5 and S12 plays an important role in translational accuracy. The chain is Small ribosomal subunit protein uS4c (rps4) from Patersonia sp. (strain Lejeune 1997).